The sequence spans 113 residues: Large ribosomal subunit protein uL22 (113 aa).

The protein belongs to the universal ribosomal protein uL22 family. Part of the 50S ribosomal subunit.

Functionally, this protein binds specifically to 23S rRNA; its binding is stimulated by other ribosomal proteins, e.g. L4, L17, and L20. It is important during the early stages of 50S assembly. It makes multiple contacts with different domains of the 23S rRNA in the assembled 50S subunit and ribosome. The globular domain of the protein is located near the polypeptide exit tunnel on the outside of the subunit, while an extended beta-hairpin is found that lines the wall of the exit tunnel in the center of the 70S ribosome. This chain is Large ribosomal subunit protein uL22, found in Bacillus subtilis (strain 168).